The sequence spans 345 residues: MSIQVSGLCKHFGQFTALNNVSIEFPSGGLVALLGPSGCGKTSLLRVIAGLERPDSGTVAIQNRDVSGLDIRERQVGFVFQHYALFRHMTIFENVAFGLRAKPKARRPNEATIKQKVNRLLQLVQLDWLADRYPAQLSGGQRQRVALARALAIEPQVLLLDEPFGALDAKVRKELRRWLRKLHDELHITSLFVTHDQEEALEVADHIVVMNKGQIEQIGTPEEIYRTPRTEFVYQFVGSSNRLYLEDSNGLSFTPSDVVSTHGKQAKRIYCRPHDFAVNTQHRPDAIPVAVARKLALGNMVRLEAYSLDNQQLVEVELSNHDPVLDEIQAKRHLWLTPKTVSQFA.

The ABC transporter domain maps to 3–237 (IQVSGLCKHF…PRTEFVYQFV (235 aa)). Residue 35-42 (GPSGCGKT) coordinates ATP.

The protein belongs to the ABC transporter superfamily. Sulfate/tungstate importer (TC 3.A.1.6) family. As to quaternary structure, the complex is composed of two ATP-binding proteins (CysA), two transmembrane proteins (CysT and CysW) and a solute-binding protein (CysP).

It is found in the cell inner membrane. The enzyme catalyses sulfate(out) + ATP + H2O = sulfate(in) + ADP + phosphate + H(+). The catalysed reaction is thiosulfate(out) + ATP + H2O = thiosulfate(in) + ADP + phosphate + H(+). Part of the ABC transporter complex CysAWTP involved in sulfate/thiosulfate import. Responsible for energy coupling to the transport system. This chain is Sulfate/thiosulfate import ATP-binding protein CysA, found in Vibrio vulnificus (strain CMCP6).